Reading from the N-terminus, the 769-residue chain is Probable beta-glucosidase M (769 aa).

An N-terminal signal peptide occupies residues 1–22 (MHSNLGLAGLAGLLATASVCLS). Residues Asn28, Asn75, and Asn262 are each glycosylated (N-linked (GlcNAc...) asparagine). Residue Asp290 is part of the active site. N-linked (GlcNAc...) asparagine glycans are attached at residues Asn318, Asn325, Asn437, and Asn546.

It belongs to the glycosyl hydrolase 3 family.

The protein resides in the secreted. The catalysed reaction is Hydrolysis of terminal, non-reducing beta-D-glucosyl residues with release of beta-D-glucose.. It functions in the pathway glycan metabolism; cellulose degradation. Its function is as follows. Beta-glucosidases are one of a number of cellulolytic enzymes involved in the degradation of cellulosic biomass. Catalyzes the last step releasing glucose from the inhibitory cellobiose. This Neosartorya fischeri (strain ATCC 1020 / DSM 3700 / CBS 544.65 / FGSC A1164 / JCM 1740 / NRRL 181 / WB 181) (Aspergillus fischerianus) protein is Probable beta-glucosidase M (bglM).